The following is a 56-amino-acid chain: Large ribosomal subunit protein eL24 (56 aa).

Zn(2+) contacts are provided by cysteine 6, cysteine 9, cysteine 32, and cysteine 36. The segment at cysteine 6–cysteine 36 adopts a C4-type zinc-finger fold.

Belongs to the eukaryotic ribosomal protein eL24 family. Part of the 50S ribosomal subunit. Forms a cluster with proteins L3 and L14. It depends on Zn(2+) as a cofactor.

Functionally, binds to the 23S rRNA. In Methanothrix thermoacetophila (strain DSM 6194 / JCM 14653 / NBRC 101360 / PT) (Methanosaeta thermophila), this protein is Large ribosomal subunit protein eL24.